The following is a 580-amino-acid chain: Protein O-linked-mannose beta-1,4-N-acetylglucosaminyltransferase 2 (580 aa).

The Cytoplasmic portion of the chain corresponds to methionine 1–serine 4. The helical; Signal-anchor for type II membrane protein transmembrane segment at alanine 5–leucine 25 threads the bilayer. Residues arginine 26–threonine 580 lie on the Lumenal side of the membrane. N-linked (GlcNAc...) asparagine glycans are attached at residues asparagine 99 and asparagine 276. The region spanning alanine 488–threonine 580 is the Fibronectin type-III domain.

Belongs to the glycosyltransferase 61 family.

The protein resides in the endoplasmic reticulum membrane. The enzyme catalyses 3-O-(alpha-D-mannosyl)-L-threonyl-[protein] + UDP-N-acetyl-alpha-D-glucosamine = 3-O-(N-acetyl-beta-D-glucosaminyl-(1-&gt;4)-alpha-D-mannosyl)-L-threonyl-[protein] + UDP + H(+). It participates in protein modification; protein glycosylation. Its function is as follows. O-linked mannose beta-1,4-N-acetylglucosaminyltransferase that transfers UDP-N-acetyl-D-glucosamine to the 4-position of the mannose to generate N-acetyl-D-glucosamine-beta-1,4-O-D-mannosylprotein. Involved in the biosynthesis of the phosphorylated O-mannosyl trisaccharide (N-acetylgalactosamine-beta-3-N-acetylglucosamine-beta-4-(phosphate-6-)mannose), a carbohydrate structure present in alpha-dystroglycan (DAG1), which is required for binding laminin G-like domain-containing extracellular proteins with high affinity. The polypeptide is Protein O-linked-mannose beta-1,4-N-acetylglucosaminyltransferase 2 (POMGNT2) (Pan troglodytes (Chimpanzee)).